We begin with the raw amino-acid sequence, 526 residues long: Glucose-6-phosphate isomerase (526 aa).

The active-site Proton donor is Glu-347. Residues His-378 and Lys-493 contribute to the active site.

Belongs to the GPI family.

The protein localises to the cytoplasm. The catalysed reaction is alpha-D-glucose 6-phosphate = beta-D-fructose 6-phosphate. The protein operates within carbohydrate biosynthesis; gluconeogenesis. Its pathway is carbohydrate degradation; glycolysis; D-glyceraldehyde 3-phosphate and glycerone phosphate from D-glucose: step 2/4. Its function is as follows. Catalyzes the reversible isomerization of glucose-6-phosphate to fructose-6-phosphate. This Chlamydia pneumoniae (Chlamydophila pneumoniae) protein is Glucose-6-phosphate isomerase.